A 509-amino-acid chain; its full sequence is Protein Jade-1 (509 aa).

The tract at residues 1–45 (MKRGRLPSSSEDSDDNGSLSTTWSQNSRSQHRRSSCSRPEDRKPS) is disordered. The interval 60–80 (DSYQLNPDEYYVLADPWRQEW) is interaction with KAT7/HBO1 and histones. The interaction with histones stretch occupies residues 80–188 (WEKGVQVPVS…EQRCYDNMNH (109 aa)). S89 bears the Phosphoserine mark. T92 carries the post-translational modification Phosphothreonine. K114 is covalently cross-linked (Glycyl lysine isopeptide (Lys-Gly) (interchain with G-Cter in SUMO2)). A PHD-type 1 zinc finger spans residues 203–253 (YVVCDVCQSPDGEDGNEMVFCDKCNICVHQACYGILKVPEGSWLCRTCALG). A C2HC pre-PHD-type zinc finger spans residues 255–289 (QPKCLLCPKKGGAMKPTRSGTKWVHVSCALWIPEV). A PHD-type 2 zinc finger spans residues 313 to 369 (LVCSLCNEKFGASIQCSVKNCRTAFHVTCAFDRGLEMKTILAENDEVKFKSYCPKHS). Residues 373-399 (KAEEGLGEGTAQENGAPECSPRDPLEP) form a disordered region.

The protein belongs to the JADE family. As to quaternary structure, component of the HBO1 complex composed at least of ING4 or ING5, KAT7/HBO1, MEAF6, and one of JADE1, JADE2 and JADE3. Interacts with NPHP4.

The protein resides in the nucleus. The protein localises to the chromosome. Its subcellular location is the cytoplasm. It is found in the cytoskeleton. It localises to the cilium basal body. Functionally, scaffold subunit of some HBO1 complexes, which have a histone H4 acetyltransferase activity. Plays a key role in HBO1 complex by directing KAT7/HBO1 specificity towards histone H4 acetylation (H4K5ac, H4K8ac and H4K12ac), regulating DNA replication initiation, regulating DNA replication initiation. May also promote acetylation of nucleosomal histone H4 by KAT5. Promotes apoptosis. May act as a renal tumor suppressor. Negatively regulates canonical Wnt signaling; at least in part, cooperates with NPHP4 in this function. In Bos taurus (Bovine), this protein is Protein Jade-1 (JADE1).